The following is a 497-amino-acid chain: Protein root UVB sensitive 6 (497 aa).

This sequence belongs to the RUS1 family.

In terms of biological role, required for normal embryo development. The polypeptide is Protein root UVB sensitive 6 (Arabidopsis thaliana (Mouse-ear cress)).